A 654-amino-acid chain; its full sequence is Insulin receptor substrate 1 (654 aa).

The PH domain occupies 3–107 (DIKKCGYLRK…WYQAILEVQA (105 aa)). Y36 carries the phosphotyrosine modification. In terms of domain architecture, IRS-type PTB spans 126–230 (FREVWQVSVR…EAMKSLSEEF (105 aa)). Residues 228–329 (EEFRPRTKSQ…EYGSSPGVLE (102 aa)) form a disordered region. Positions 235-245 (KSQSLSSTPIS) are enriched in polar residues. The residue at position 276 (S276) is a Phosphoserine. Polar residues predominate over residues 307–321 (NESSADYGSASSDEY). Y345 is modified (phosphotyrosine; by INSR). 6 short sequence motifs (YXXM motif) span residues 345–348 (YISM), 384–387 (YAMM), 398–401 (YMPM), 411–414 (YMPM), 430–433 (YVMM), and 466–469 (YMNM). Residues Y398 and Y411 each carry the phosphotyrosine; by INSR modification. Y430 is subject to Phosphotyrosine. Disordered regions lie at residues 473–494 (SRSA…GGPC) and 507–532 (YKME…VNAG). Positions 514-524 (SARASCSSSSD) are enriched in low complexity. Y563 carries the post-translational modification Phosphotyrosine; by INSR.

Interacts with the NPXY motif of tyrosine-phosphorylated igf1r and insr via the PTB domain. Binds to phosphatidylinositol 3-kinase p85 subunit via the phosphorylated YXXM motifs.

May mediate the control of various cellular processes by insulin. When phosphorylated by the insulin receptor binds specifically to various cellular proteins containing SH2 domains such as phosphatidylinositol 3-kinase p85 subunit or grb2. Activates phosphatidylinositol 3-kinase when bound to the regulatory p85 subunit. This is Insulin receptor substrate 1 from Xenopus tropicalis (Western clawed frog).